Consider the following 835-residue polypeptide: Phosphatidylinositol 4-kinase beta (835 aa).

3 disordered regions span residues 1–61 (MGDT…PLDV), 99–139 (SSAS…VRRR), and 267–341 (PSSQ…PVRL). The segment covering 19-59 (SPSTSTTSSLSLPSSPSSGPHPLTSSSPSTSEGLPTSSPPL) has biased composition (low complexity). A PIK helical domain is found at 59 to 262 (LDVISEGLGE…GTKLRKLILS (204 aa)). 2 stretches are compositionally biased toward basic and acidic residues: residues 125-134 (ISEEEVEPIK) and 267-276 (PSSQRIRREV). Pro residues predominate over residues 277–288 (PQPPPPYPPPLH). A compositionally biased stretch (polar residues) spans 311–332 (DATVSISLSSNLKRTASNPKVE). The PI3K/PI4K catalytic domain occupies 554–820 (EPWQEKVRRI…MVDGSMRSIT (267 aa)). The segment at 560-566 (VRRIREG) is G-loop. The catalytic loop stretch occupies residues 687–695 (QVKDRHNGN). Residues 706 to 730 (HIDFGFILSSSPRNLGFETSAFKLT) are activation loop.

Belongs to the PI3/PI4-kinase family. Type III PI4K subfamily. Mg(2+) serves as cofactor. The cofactor is Mn(2+). In terms of tissue distribution, expressed in the inner ear otic vesicles.

The protein resides in the endomembrane system. It localises to the mitochondrion outer membrane. The protein localises to the rough endoplasmic reticulum membrane. It catalyses the reaction a 1,2-diacyl-sn-glycero-3-phospho-(1D-myo-inositol) + ATP = a 1,2-diacyl-sn-glycero-3-phospho-(1D-myo-inositol 4-phosphate) + ADP + H(+). In terms of biological role, phosphorylates phosphatidylinositol (PI) in the first committed step in the production of the second messenger inositol-1,4,5,-trisphosphate (PIP). May play an important role the in inner ear development. The polypeptide is Phosphatidylinositol 4-kinase beta (pi4kb) (Danio rerio (Zebrafish)).